The chain runs to 454 residues: Cobyrinate a,c-diamide synthase (454 aa).

In terms of domain architecture, GATase cobBQ-type spans 244 to 440 (RLGIAKDKAF…LHVHFYQNPK (197 aa)). Cys326 serves as the catalytic Nucleophile.

This sequence belongs to the CobB/CbiA family. Requires Mg(2+) as cofactor.

It carries out the reaction cob(II)yrinate + 2 L-glutamine + 2 ATP + 2 H2O = cob(II)yrinate a,c diamide + 2 L-glutamate + 2 ADP + 2 phosphate + 2 H(+). The protein operates within cofactor biosynthesis; adenosylcobalamin biosynthesis; cob(II)yrinate a,c-diamide from sirohydrochlorin (anaerobic route): step 10/10. Catalyzes the ATP-dependent amidation of the two carboxylate groups at positions a and c of cobyrinate, using either L-glutamine or ammonia as the nitrogen source. The sequence is that of Cobyrinate a,c-diamide synthase from Limosilactobacillus reuteri subsp. reuteri (strain JCM 1112) (Lactobacillus reuteri).